A 141-amino-acid polypeptide reads, in one-letter code: D-aminoacyl-tRNA deacylase (141 aa).

The Gly-cisPro motif, important for rejection of L-amino acids motif lies at 133 to 134 (GP).

Belongs to the DTD family. Homodimer.

It localises to the cytoplasm. The catalysed reaction is glycyl-tRNA(Ala) + H2O = tRNA(Ala) + glycine + H(+). It catalyses the reaction a D-aminoacyl-tRNA + H2O = a tRNA + a D-alpha-amino acid + H(+). In terms of biological role, an aminoacyl-tRNA editing enzyme that deacylates mischarged D-aminoacyl-tRNAs. Also deacylates mischarged glycyl-tRNA(Ala), protecting cells against glycine mischarging by AlaRS. Acts via tRNA-based rather than protein-based catalysis; rejects L-amino acids rather than detecting D-amino acids in the active site. By recycling D-aminoacyl-tRNA to D-amino acids and free tRNA molecules, this enzyme counteracts the toxicity associated with the formation of D-aminoacyl-tRNA entities in vivo and helps enforce protein L-homochirality. The sequence is that of D-aminoacyl-tRNA deacylase from Kineococcus radiotolerans (strain ATCC BAA-149 / DSM 14245 / SRS30216).